The primary structure comprises 324 residues: Beta-ketoacyl-[acyl-carrier-protein] synthase III (324 aa).

Active-site residues include Cys114 and His251. Residues 252 to 256 (QANLR) form an ACP-binding region. Asn281 is a catalytic residue.

Belongs to the thiolase-like superfamily. FabH family. As to quaternary structure, homodimer.

The protein resides in the cytoplasm. The enzyme catalyses malonyl-[ACP] + acetyl-CoA + H(+) = 3-oxobutanoyl-[ACP] + CO2 + CoA. It participates in lipid metabolism; fatty acid biosynthesis. Functionally, catalyzes the condensation reaction of fatty acid synthesis by the addition to an acyl acceptor of two carbons from malonyl-ACP. Catalyzes the first condensation reaction which initiates fatty acid synthesis and may therefore play a role in governing the total rate of fatty acid production. Possesses both acetoacetyl-ACP synthase and acetyl transacylase activities. Its substrate specificity determines the biosynthesis of branched-chain and/or straight-chain of fatty acids. The chain is Beta-ketoacyl-[acyl-carrier-protein] synthase III from Dinoroseobacter shibae (strain DSM 16493 / NCIMB 14021 / DFL 12).